The primary structure comprises 383 residues: Trichodiene synthase (383 aa).

Belongs to the trichodiene synthase family.

It carries out the reaction (2E,6E)-farnesyl diphosphate = trichodiene + diphosphate. Its pathway is sesquiterpene biosynthesis; trichothecene biosynthesis. Functionally, TS is a member of the terpene cyclase group of enzymes. It catalyzes the isomerization and cyclization of farnesyl pyro-phosphate to form trichodiene, the first cyclic intermediate in the biosynthetic pathway for trichothecenes. It serves to branch trichothecene biosynthesis from the isoprenoid pathway. In Gibberella pulicaris, this protein is Trichodiene synthase (TRI5).